A 65-amino-acid chain; its full sequence is Large ribosomal subunit protein bL35 (65 aa).

This sequence belongs to the bacterial ribosomal protein bL35 family.

The polypeptide is Large ribosomal subunit protein bL35 (Sodalis glossinidius (strain morsitans)).